The primary structure comprises 481 residues: Endoplasmic reticulum lectin 1 (481 aa).

The first 27 residues, 1–27 (MRRSDRLRCAGASLLVVLCGVFRSSFG), serve as a signal peptide directing secretion. 2 consecutive MRH domains span residues 108–245 (SSCS…LCNH) and 340–467 (SYCF…ICKI). Disulfide bonds link Cys-110–Cys-123, Cys-198–Cys-231, Cys-214–Cys-243, Cys-342–Cys-355, Cys-419–Cys-453, and Cys-434–Cys-465.

The protein localises to the endoplasmic reticulum lumen. Probable lectin that binds selectively to improperly folded lumenal proteins. May function in endoplasmic reticulum quality control and endoplasmic reticulum-associated degradation (ERAD) of both non-glycosylated proteins and glycoproteins. This is Endoplasmic reticulum lectin 1 (erlec1) from Xenopus tropicalis (Western clawed frog).